Reading from the N-terminus, the 1262-residue chain is Isoleucine--tRNA ligase, cytoplasmic (1262 aa).

The residue at position 1 (methionine 1) is an N-acetylmethionine. Positions 48-58 match the 'HIGH' region motif; it reads PFATGLPHYGH. The 'KMSKS' region motif lies at 600–604; it reads KMSKR. Residue lysine 603 coordinates ATP. Serine 1047 and serine 1049 each carry phosphoserine. Threonine 1058 is modified (phosphothreonine).

This sequence belongs to the class-I aminoacyl-tRNA synthetase family. Part of a multisubunit complex that groups tRNA ligases for Arg (RARS1), Asp (DARS1), Gln (QARS1), Ile (IARS1), Leu (LARS1), Lys (KARS1), Met (MARS1) the bifunctional ligase for Glu and Pro (EPRS1) and the auxiliary subunits AIMP1/p43, AIMP2/p38 and EEF1E1/p18. As to expression, expressed in liver and muscle (at protein level).

The protein localises to the cytoplasm. Its subcellular location is the cytosol. The enzyme catalyses tRNA(Ile) + L-isoleucine + ATP = L-isoleucyl-tRNA(Ile) + AMP + diphosphate. Functionally, catalyzes the specific attachment of an amino acid to its cognate tRNA in a 2 step reaction: the amino acid (AA) is first activated by ATP to form AA-AMP and then transferred to the acceptor end of the tRNA. In Homo sapiens (Human), this protein is Isoleucine--tRNA ligase, cytoplasmic.